We begin with the raw amino-acid sequence, 64 residues long: Mitotic-spindle organizing protein 1 (64 aa).

It belongs to the MOZART1 family. In terms of assembly, part of the gamma-tubulin complex. Interacts directly with alp6/GPC3.

It is found in the cytoplasm. It localises to the cytoskeleton. The protein localises to the microtubule organizing center. Its subcellular location is the spindle pole body. Required for gamma-tubulin complex recruitment to the microtubule organizing center (MTOC). This chain is Mitotic-spindle organizing protein 1 (mzt1), found in Schizosaccharomyces pombe (strain 972 / ATCC 24843) (Fission yeast).